We begin with the raw amino-acid sequence, 160 residues long: Large ribosomal subunit protein eL21A (160 aa).

The interval alanine 114–alanine 138 is disordered.

It belongs to the eukaryotic ribosomal protein eL21 family. In terms of assembly, component of the large ribosomal subunit (LSU). Mature yeast ribosomes consist of a small (40S) and a large (60S) subunit. The 40S small subunit contains 1 molecule of ribosomal RNA (18S rRNA) and at least 33 different proteins. The large 60S subunit contains 3 rRNA molecules (25S, 5.8S and 5S rRNA) and at least 46 different proteins.

It localises to the cytoplasm. In terms of biological role, component of the ribosome, a large ribonucleoprotein complex responsible for the synthesis of proteins in the cell. The small ribosomal subunit (SSU) binds messenger RNAs (mRNAs) and translates the encoded message by selecting cognate aminoacyl-transfer RNA (tRNA) molecules. The large subunit (LSU) contains the ribosomal catalytic site termed the peptidyl transferase center (PTC), which catalyzes the formation of peptide bonds, thereby polymerizing the amino acids delivered by tRNAs into a polypeptide chain. The nascent polypeptides leave the ribosome through a tunnel in the LSU and interact with protein factors that function in enzymatic processing, targeting, and the membrane insertion of nascent chains at the exit of the ribosomal tunnel. This is Large ribosomal subunit protein eL21A (rpl2101) from Schizosaccharomyces pombe (strain 972 / ATCC 24843) (Fission yeast).